The sequence spans 447 residues: Probable glycine dehydrogenase (decarboxylating) subunit 1 (447 aa).

This sequence belongs to the GcvP family. N-terminal subunit subfamily. The glycine cleavage system is composed of four proteins: P, T, L and H. In this organism, the P 'protein' is a heterodimer of two subunits.

It carries out the reaction N(6)-[(R)-lipoyl]-L-lysyl-[glycine-cleavage complex H protein] + glycine + H(+) = N(6)-[(R)-S(8)-aminomethyldihydrolipoyl]-L-lysyl-[glycine-cleavage complex H protein] + CO2. In terms of biological role, the glycine cleavage system catalyzes the degradation of glycine. The P protein binds the alpha-amino group of glycine through its pyridoxal phosphate cofactor; CO(2) is released and the remaining methylamine moiety is then transferred to the lipoamide cofactor of the H protein. The sequence is that of Probable glycine dehydrogenase (decarboxylating) subunit 1 from Bacillus cytotoxicus (strain DSM 22905 / CIP 110041 / 391-98 / NVH 391-98).